Here is a 259-residue protein sequence, read N- to C-terminus: Hydroxyethylthiazole kinase (259 aa).

Met-38 contacts substrate. 2 residues coordinate ATP: Arg-113 and Ser-158. Gly-185 provides a ligand contact to substrate.

Belongs to the Thz kinase family. The cofactor is Mg(2+).

It carries out the reaction 5-(2-hydroxyethyl)-4-methylthiazole + ATP = 4-methyl-5-(2-phosphooxyethyl)-thiazole + ADP + H(+). The protein operates within cofactor biosynthesis; thiamine diphosphate biosynthesis; 4-methyl-5-(2-phosphoethyl)-thiazole from 5-(2-hydroxyethyl)-4-methylthiazole: step 1/1. Functionally, catalyzes the phosphorylation of the hydroxyl group of 4-methyl-5-beta-hydroxyethylthiazole (THZ). This Leuconostoc citreum (strain KM20) protein is Hydroxyethylthiazole kinase.